The sequence spans 566 residues: Proline--tRNA ligase (566 aa).

The protein belongs to the class-II aminoacyl-tRNA synthetase family. ProS type 1 subfamily. As to quaternary structure, homodimer.

The protein resides in the cytoplasm. It carries out the reaction tRNA(Pro) + L-proline + ATP = L-prolyl-tRNA(Pro) + AMP + diphosphate. Its function is as follows. Catalyzes the attachment of proline to tRNA(Pro) in a two-step reaction: proline is first activated by ATP to form Pro-AMP and then transferred to the acceptor end of tRNA(Pro). As ProRS can inadvertently accommodate and process non-cognate amino acids such as alanine and cysteine, to avoid such errors it has two additional distinct editing activities against alanine. One activity is designated as 'pretransfer' editing and involves the tRNA(Pro)-independent hydrolysis of activated Ala-AMP. The other activity is designated 'posttransfer' editing and involves deacylation of mischarged Ala-tRNA(Pro). The misacylated Cys-tRNA(Pro) is not edited by ProRS. This chain is Proline--tRNA ligase, found in Bacillus cereus (strain G9842).